Consider the following 331-residue polypeptide: uncharacterized protein (331 aa).

ATP is bound at residue 43–50; that stretch reads GANESGKS.

This is an uncharacterized protein from Methanocaldococcus jannaschii (strain ATCC 43067 / DSM 2661 / JAL-1 / JCM 10045 / NBRC 100440) (Methanococcus jannaschii).